The primary structure comprises 911 residues: Desmoglein-1-gamma (911 aa).

Residues 1-23 (MDWHSFRIAALLLTSLVVLEVNS) form the signal peptide. Positions 24–49 (EFQIQVRDHNAKNGTIKWHSIRRQKR) are excised as a propeptide. Cadherin domains lie at 50-157 (EWIK…PPVF), 158-269 (SMTT…IPYL), and 270-389 (EQSS…QPGS). Over 50–519 (EWIKFAAACR…PNVDNVHFGP (470 aa)) the chain is Extracellular. N-linked (GlcNAc...) (high mannose) asparagine glycosylation occurs at Asn110. N-linked (GlcNAc...) asparagine glycosylation is present at Asn180. Asn401 is a glycosylation site (N-linked (GlcNAc...) asparagine). Residues 520–540 (AGIGLLIMGFLVLGLVPFLLI) traverse the membrane as a helical segment. Over 541–911 (SCDCGGAPGG…GMIGNLSIPP (371 aa)) the chain is Cytoplasmic. Desmoglein repeat repeat units follow at residues 783-809 (AYPS…TVRE), 810-839 (SYTT…ERVV), 840-869 (GPIS…ERVI), and 870-897 (APGS…ERVI). Residues 898–911 (QPTSGMIGNLSIPP) form a Desmoglein repeat 5; truncated repeat.

Interacts with DSC3; there is evidence to suggest that the interaction promotes cell-cell adhesion of keratinocytes. As to expression, expressed in epidermis, brain, liver, skeletal, muscle and testis.

The protein localises to the cell membrane. The protein resides in the cell junction. It is found in the desmosome. It localises to the cytoplasm. Its subcellular location is the nucleus. Component of intercellular desmosome junctions. Involved in the interaction of plaque proteins and intermediate filaments mediating cell-cell adhesion. This is Desmoglein-1-gamma (Dsg1c) from Mus musculus (Mouse).